A 333-amino-acid chain; its full sequence is MARILDNDLLGDEEYVERTLRPQYFKEYIGQDKVKDQLKIFIEAAKLRDEALDHTLLFGPPGLGKTTMAFVIANEMGVNLKQTSGPAIEKAGDLVAILNDLEPGDILFIDEIHRMPMAVEEVLYSAMEDYYIDIMIGAGETSRSVHLDLPPFTLVGATTRAGMLSNPLRARFGINGHMEYYELPDLTEIVERTSEIFEMTITPEAALELARRSRGTPRIANRLLKRVRDYAQIMGDGVIDDKIADQALTMLDVDHEGLDYVDQKILRTMIEMYGGGPVGLGTLSVNIAEERETVEDMYEPYLIQKGFIMRTRTGRVATAKAYEHMGYDYTRDN.

The tract at residues 1 to 181 (MARILDNDLL…FGINGHMEYY (181 aa)) is large ATPase domain (RuvB-L). Residues Leu20, Arg21, Gly62, Lys65, Thr66, Thr67, 128-130 (EDY), Arg171, Tyr181, and Arg218 contribute to the ATP site. Position 66 (Thr66) interacts with Mg(2+). Residues 130-148 (YYIDIMIGAGETSRSVHLD) form a presensor-1 beta-hairpin region. The segment at 182 to 252 (ELPDLTEIVE…IADQALTMLD (71 aa)) is small ATPAse domain (RuvB-S). Residues 255-333 (HEGLDYVDQK…HMGYDYTRDN (79 aa)) form a head domain (RuvB-H) region. Arg291, Arg310, Arg312, and Arg315 together coordinate DNA.

The protein belongs to the RuvB family. In terms of assembly, homohexamer. Forms an RuvA(8)-RuvB(12)-Holliday junction (HJ) complex. HJ DNA is sandwiched between 2 RuvA tetramers; dsDNA enters through RuvA and exits via RuvB. Only 4 subunits contact one DNA strand at any time. Two adjacent subunits are contacted by domain III of RuvA. An RuvB hexamer assembles on each DNA strand where it exits the tetramer. Each RuvB hexamer is contacted by two RuvA subunits (via domain III) on 2 adjacent RuvB subunits; this complex drives branch migration. In the full resolvosome a probable DNA-RuvA(4)-RuvB(12)-RuvC(2) complex forms which resolves the HJ.

Its subcellular location is the cytoplasm. It catalyses the reaction ATP + H2O = ADP + phosphate + H(+). With respect to regulation, binding of domain III of RuvA to a single subunit of the RuvB hexamer activates the ATPase 2 subunits away and nucleotide exchange in the adjacent subunit. In terms of biological role, the RuvA-RuvB-RuvC complex processes Holliday junction (HJ) DNA during genetic recombination and DNA repair, while the RuvA-RuvB complex plays an important role in the rescue of blocked DNA replication forks via replication fork reversal (RFR). Catalyzes branch migration on Holliday junction (HJ) DNA in complex with RuvA from S.typhimurim and ATP. RuvA specifically binds to HJ cruciform DNA, conferring on it an open structure. The RuvB hexamer acts as an ATP-dependent pump, pulling dsDNA into and through the RuvAB complex. Forms 2 homohexamers on either side of HJ DNA bound by 1 or 2 RuvA tetramers; 4 subunits per hexamer contact DNA at a time. Coordinated motions by a converter formed by DNA-disengaged RuvB subunits stimulates ATP hydrolysis and nucleotide exchange. Immobilization of the converter enables RuvB to convert the ATP-contained energy into a lever motion, pulling 2 nucleotides of DNA out of the RuvA tetramer per ATP hydrolyzed, thus driving DNA branch migration. The RuvB motors rotate together with the DNA substrate, which together with the progressing nucleotide cycle forms the mechanistic basis for DNA recombination by continuous branch migration. Branch migration allows RuvC to scan DNA until it finds its consensus sequence, where it cleaves and resolves cruciform DNA. This Streptococcus thermophilus (strain ATCC BAA-250 / LMG 18311) protein is Holliday junction branch migration complex subunit RuvB.